Consider the following 83-residue polypeptide: Small ribosomal subunit protein bS21 (83 aa).

Residues 40-83 (TPMDERRRKARSASKRNKVKWRYSNKSEETASETAETPASAPEA) are disordered. Basic residues predominate over residues 47 to 62 (RKARSASKRNKVKWRY). Low complexity predominate over residues 71 to 83 (SETAETPASAPEA).

It belongs to the bacterial ribosomal protein bS21 family.

The protein is Small ribosomal subunit protein bS21 of Akkermansia muciniphila (strain ATCC BAA-835 / DSM 22959 / JCM 33894 / BCRC 81048 / CCUG 64013 / CIP 107961 / Muc).